Here is a 364-residue protein sequence, read N- to C-terminus: Long-wave-sensitive opsin 1 (364 aa).

The tract at residues 1–23 (MAQQWSLQRLAGRHPQDSYEDST) is disordered. Topologically, residues 1–52 (MAQQWSLQRLAGRHPQDSYEDSTQSSIFTYTNSNSTRGPFEGPNYHIAPRWV) are extracellular. Residue Ser-22 is glycosylated (O-linked (GlcNAc) serine). N-linked (GlcNAc...) asparagine glycosylation occurs at Asn-34. Residues 53–77 (YHLTSVWMIFVVTASVFTNGLVLAA) traverse the membrane as a helical segment. At 78–89 (TMKFKKLRHPLN) the chain is on the cytoplasmic side. A helical transmembrane segment spans residues 90–115 (WILVNLAVADLAETVIASTISIVNQV). Residues 116–129 (SGYFVLGHPMCVLE) are Extracellular-facing. The cysteines at positions 126 and 203 are disulfide-linked. A helical membrane pass occupies residues 130-149 (GYTVSLCGITGLWSLAIISW). The Cytoplasmic portion of the chain corresponds to 150 to 168 (ERWMVVCKPFGNVRFDAKL). Residues 169–192 (AIVGIAFSWIWAAVWTAPPIFGWS) traverse the membrane as a helical segment. The Extracellular segment spans residues 193-218 (RYWPHGLKTSCGPDVFSGSSYPGVQS). Residues 219 to 246 (YMIVLMVTCCIIPLAIIMLCYLQVWLAI) form a helical membrane-spanning segment. Residues 247 to 268 (RAVAKQQKESESTQKAEKEVTR) are Cytoplasmic-facing. A helical membrane pass occupies residues 269–292 (MVVVMIFAYCVCWGPYTFFACFAA). The Extracellular portion of the chain corresponds to 293–300 (ANPGYAFH). A helical membrane pass occupies residues 301 to 325 (PLMAALPAYFAKSATIYNPVIYVFM). Position 312 is an N6-(retinylidene)lysine (Lys-312). Over 326-364 (NRQFRNCILQLFGKKVDDGSELSSASKTEVSSVSSVSPA) the chain is Cytoplasmic.

The protein belongs to the G-protein coupled receptor 1 family. Opsin subfamily. In terms of processing, phosphorylated on some or all of the serine and threonine residues present in the C-terminal region. As to expression, the three color pigments are found in the cone photoreceptor cells.

The protein resides in the membrane. In terms of biological role, visual pigments are the light-absorbing molecules that mediate vision. They consist of an apoprotein, opsin, covalently linked to cis-retinal. The sequence is that of Long-wave-sensitive opsin 1 (OPN1LW) from Homo sapiens (Human).